A 75-amino-acid polypeptide reads, in one-letter code: DNA-directed RNA polymerase subunit omega (75 aa).

The protein belongs to the RNA polymerase subunit omega family. In terms of assembly, the RNAP catalytic core consists of 2 alpha, 1 beta, 1 beta' and 1 omega subunit. When a sigma factor is associated with the core the holoenzyme is formed, which can initiate transcription.

It catalyses the reaction RNA(n) + a ribonucleoside 5'-triphosphate = RNA(n+1) + diphosphate. Functionally, promotes RNA polymerase assembly. Latches the N- and C-terminal regions of the beta' subunit thereby facilitating its interaction with the beta and alpha subunits. The chain is DNA-directed RNA polymerase subunit omega from Nitratidesulfovibrio vulgaris (strain DSM 19637 / Miyazaki F) (Desulfovibrio vulgaris).